The following is a 159-amino-acid chain: NADH-quinone oxidoreductase subunit I (159 aa).

4Fe-4S ferredoxin-type domains lie at 50–80 (QRRYPNGEERCIACKLCEAVCPAMAINIESE) and 90–119 (KRYDIDLTKCIFCGFCEEACPTDAIVETHI). C60, C63, C66, C70, C99, C102, C105, and C109 together coordinate [4Fe-4S] cluster.

This sequence belongs to the complex I 23 kDa subunit family. As to quaternary structure, NDH-1 is composed of 14 different subunits. Subunits NuoA, H, J, K, L, M, N constitute the membrane sector of the complex. The cofactor is [4Fe-4S] cluster.

The protein localises to the cell inner membrane. It carries out the reaction a quinone + NADH + 5 H(+)(in) = a quinol + NAD(+) + 4 H(+)(out). Its function is as follows. NDH-1 shuttles electrons from NADH, via FMN and iron-sulfur (Fe-S) centers, to quinones in the respiratory chain. The immediate electron acceptor for the enzyme in this species is believed to be ubiquinone. Couples the redox reaction to proton translocation (for every two electrons transferred, four hydrogen ions are translocated across the cytoplasmic membrane), and thus conserves the redox energy in a proton gradient. This Neisseria meningitidis serogroup A / serotype 4A (strain DSM 15465 / Z2491) protein is NADH-quinone oxidoreductase subunit I.